Reading from the N-terminus, the 206-residue chain is Threonine efflux protein (206 aa).

The helical transmembrane segment at methionine 1–proline 21 threads the bilayer. At aspartate 22–leucine 43 the chain is on the periplasmic side. Residues glycine 44 to isoleucine 64 traverse the membrane as a helical segment. Residues glutamate 65–lysine 66 are Cytoplasmic-facing. The chain crosses the membrane as a helical span at residues methionine 67–tyrosine 87. The Periplasmic portion of the chain corresponds to glutamine 88–arginine 149. A helical transmembrane segment spans residues tryptophan 150 to leucine 173. The Cytoplasmic portion of the chain corresponds to proline 174–arginine 206.

The protein belongs to the Rht family.

It localises to the cell inner membrane. Functionally, conducts the efflux of threonine. In Salmonella typhi, this protein is Threonine efflux protein (rhtC).